The following is a 329-amino-acid chain: MAP kinase-activated protein kinase 2 (329 aa).

Residues 1-7 and lysine 22 each bind ATP; that span reads LGINGKV. In terms of domain architecture, Protein kinase spans 1–254; that stretch reads LGINGKVLRI…ITEFMNHPWI (254 aa). 68–70 is a binding site for staurosporine; the sequence is ECL. Residue aspartate 115 is the Proton acceptor of the active site. Threonine 151 bears the Phosphothreonine; by MAPK14 mark. Serine 201 carries the post-translational modification Phosphoserine; by MAPK14. The residue at position 257 (serine 257) is a Phosphoserine; by autocatalysis. Residues 257–293 are autoinhibitory helix; the sequence is STKVPQTPLHTSRVLKEDKERWEDVKEEMTSALATMR. Position 263 is a phosphothreonine; by MAPK14 (threonine 263). A Glycyl lysine isopeptide (Lys-Gly) (interchain with G-Cter in SUMO) cross-link involves residue lysine 282. The short motif at 285–294 is the Nuclear export signal (NES) element; sequence MTSALATMRV. The interval 295–319 is p38 MAPK-binding site; the sequence is DYEQIKIKKIEDASNPLLLKRRKKA. 2 consecutive short sequence motifs (bipartite nuclear localization signal) follow at residues 300 to 303 and 314 to 318; these read KIKK and KRRKK.

Belongs to the protein kinase superfamily. CAMK Ser/Thr protein kinase family. Heterodimer with p38-alpha/MAPK14; this heterodimer forms a stable complex: molecules are positioned 'face to face' so that the ATP-binding sites of both kinases are at the heterodimer interface. Interacts with PHC2. Interacts with HSF1. Sumoylation inhibits the protein kinase activity. In terms of processing, phosphorylated and activated by MAP kinase p38-alpha/MAPK14 at Thr-151, Ser-201 and Thr-263.

It localises to the cytoplasm. Its subcellular location is the nucleus. It catalyses the reaction L-seryl-[protein] + ATP = O-phospho-L-seryl-[protein] + ADP + H(+). It carries out the reaction L-threonyl-[protein] + ATP = O-phospho-L-threonyl-[protein] + ADP + H(+). Its activity is regulated as follows. Activated following phosphorylation by p38-alpha/MAPK14 following various stresses. Inhibited following sumoylation. Specifically inhibited by pyrrolopyridine inhibitors. In terms of biological role, stress-activated serine/threonine-protein kinase involved in cytokine production, endocytosis, reorganization of the cytoskeleton, cell migration, cell cycle control, chromatin remodeling, DNA damage response and transcriptional regulation. Following stress, it is phosphorylated and activated by MAP kinase p38-alpha/MAPK14, leading to phosphorylation of substrates. Phosphorylates serine in the peptide sequence, Hyd-X-R-X(2)-S, where Hyd is a large hydrophobic residue. Phosphorylates ALOX5, CDC25B, CDC25C, CEP131, ELAVL1, HNRNPA0, HSP27/HSPB1, KRT18, KRT20, LIMK1, LSP1, PABPC1, PARN, PDE4A, RCSD1, RPS6KA3, TAB3 and TTP/ZFP36. Phosphorylates HSF1; leading to the interaction with HSP90 proteins and inhibiting HSF1 homotrimerization, DNA-binding and transactivation activities. Mediates phosphorylation of HSP27/HSPB1 in response to stress, leading to the dissociation of HSP27/HSPB1 from large small heat-shock protein (sHsps) oligomers and impairment of their chaperone activities and ability to protect against oxidative stress effectively. Involved in inflammatory response by regulating tumor necrosis factor (TNF) and IL6 production post-transcriptionally: acts by phosphorylating AU-rich elements (AREs)-binding proteins ELAVL1, HNRNPA0, PABPC1 and TTP/ZFP36, leading to regulation of the stability and translation of TNF and IL6 mRNAs. Phosphorylation of TTP/ZFP36, a major post-transcriptional regulator of TNF, promotes its binding to 14-3-3 proteins and reduces its ARE mRNA affinity, leading to inhibition of dependent degradation of ARE-containing transcripts. Phosphorylates CEP131 in response to cellular stress following ultraviolet irradiation which promotes binding of CEP131 to 14-3-3 proteins and inhibits formation of novel centriolar satellites. Also involved in late G2/M checkpoint following DNA damage through a process of post-transcriptional mRNA stabilization: following DNA damage, relocalizes from nucleus to cytoplasm and phosphorylates HNRNPA0 and PARN, leading to stabilization of GADD45A mRNA. Involved in toll-like receptor signaling pathway (TLR) in dendritic cells: required for acute TLR-induced macropinocytosis by phosphorylating and activating RPS6KA3. This chain is MAP kinase-activated protein kinase 2 (MAPKAPK2), found in Cricetulus longicaudatus (Long-tailed dwarf hamster).